The sequence spans 135 residues: Protein Wnt-7b (135 aa).

2 disulfides stabilise this stretch: Cys-3/Cys-17 and Cys-5/Cys-12. Ser-9 carries O-palmitoleoyl serine; by PORCN lipidation. The disordered linker stretch occupies residues 41 to 69 (VEVVRANRLRQPTFLKIKKVRSYQKPMET). 3 cysteine pairs are disulfide-bonded: Cys-81/Cys-112, Cys-97/Cys-107, and Cys-134/Cys-135. The N-linked (GlcNAc...) asparagine glycan is linked to Asn-98.

It belongs to the Wnt family. Palmitoleoylation is required for efficient binding to frizzled receptors. Depalmitoleoylation leads to Wnt signaling pathway inhibition. As to expression, in adults, in brain and lung.

Its subcellular location is the secreted. The protein localises to the extracellular space. The protein resides in the extracellular matrix. Functionally, ligand for members of the frizzled family of seven transmembrane receptors that functions in the canonical Wnt/beta-catenin signaling pathway. Required for normal fusion of the chorion and the allantois during placenta development. Required for central nervous system (CNS) angiogenesis and blood-brain barrier regulation. The polypeptide is Protein Wnt-7b (wnt7b) (Xenopus laevis (African clawed frog)).